Consider the following 331-residue polypeptide: Probable serine hydrolase (331 aa).

The tract at residues 1 to 28 (MGQTRVAATTAAQSPAAELSPETNGQTE) is disordered. Residues 7-17 (AATTAAQSPAA) show a composition bias toward low complexity. Residues 63–163 (PIIALHGWQD…EVEKLINIDI (101 aa)) form the AB hydrolase-1 domain. Serine 138 is a catalytic residue.

This sequence belongs to the AB hydrolase superfamily. Ubiquitously expressed before embryonic stage 11. At stage 11, expression is concentrated in the foregut and posterior midgut. By stage 15, in gastric caeca, pharynx, posterior spiracles and anterior edge of midgut. At the end of embryogenesis, expression is confined to gastric caeca. During third instar larvae, expressed at low levels in gastric caeca, midgut and hindgut and high level in fat body.

In terms of biological role, may have a role in detoxification and digestion during embryogenesis and larval development. The protein is Probable serine hydrolase (kraken) of Drosophila melanogaster (Fruit fly).